The chain runs to 267 residues: Deoxyribose-phosphate aldolase (267 aa).

The Proton donor/acceptor role is filled by Asp123. Catalysis depends on Lys185, which acts as the Schiff-base intermediate with acetaldehyde. Catalysis depends on Lys217, which acts as the Proton donor/acceptor.

This sequence belongs to the DeoC/FbaB aldolase family. DeoC type 1 subfamily.

The protein localises to the cytoplasm. It catalyses the reaction 2-deoxy-D-ribose 5-phosphate = D-glyceraldehyde 3-phosphate + acetaldehyde. The protein operates within carbohydrate degradation; 2-deoxy-D-ribose 1-phosphate degradation; D-glyceraldehyde 3-phosphate and acetaldehyde from 2-deoxy-alpha-D-ribose 1-phosphate: step 2/2. Functionally, catalyzes a reversible aldol reaction between acetaldehyde and D-glyceraldehyde 3-phosphate to generate 2-deoxy-D-ribose 5-phosphate. This Coccidioides immitis (strain RS) (Valley fever fungus) protein is Deoxyribose-phosphate aldolase.